The sequence spans 1877 residues: Protein TIC 214 (1877 aa).

6 helical membrane passes run 18-38 (IINS…FSIG), 67-87 (FIAG…HLAL), 90-110 (PHTI…WNNH), 127-147 (LSIQ…HFIL), 175-195 (VGWL…LVWI), and 224-244 (IFSI…PSPI). Basic and acidic residues predominate over residues 249 to 258 (FKETSETEER). Residues 249–308 (FKETSETEERGEGEEETDVEIETTFETKGTRQEQEGSTEEDPSLFSEEKEDPDKIDEREE) form a disordered region. Composition is skewed to acidic residues over residues 259–271 (GEGE…EIET) and 284–298 (GSTE…EEKE). Positions 299 to 308 (DPDKIDEREE) are enriched in basic and acidic residues.

It belongs to the TIC214 family. As to quaternary structure, part of the Tic complex.

The protein resides in the plastid. It is found in the chloroplast inner membrane. Involved in protein precursor import into chloroplasts. May be part of an intermediate translocation complex acting as a protein-conducting channel at the inner envelope. The sequence is that of Protein TIC 214 from Eucalyptus globulus subsp. globulus (Tasmanian blue gum).